Here is a 484-residue protein sequence, read N- to C-terminus: 60S ribosome subunit biogenesis protein NOP8 (484 aa).

Positions 7 to 83 (KRIFVGNIFH…NILKVDEAKP (77 aa)) constitute an RRM domain. Phosphoserine is present on residues Ser234, Ser239, and Ser268. The segment at 260–330 (DKPMTLNDSD…EGDGQEDNEF (71 aa)) is disordered. Positions 320-329 (DEGDGQEDNE) are enriched in acidic residues. A Phosphoserine modification is found at Ser370.

Interacts with NIP7 and RRP43. Together with DBP6, URB1, URB2 and RSA3, forms an RNA-independent complex, which is required during early maturation of nascent 60S ribosomal subunits.

It is found in the nucleus. It localises to the nucleolus. Its function is as follows. Required for 60S ribosomal subunit synthesis. May be involved in assembly reactions occurring within late pre-ribosomal particles. This Saccharomyces cerevisiae (strain ATCC 204508 / S288c) (Baker's yeast) protein is 60S ribosome subunit biogenesis protein NOP8 (NOP8).